The sequence spans 130 residues: Protein Wnt-9 (130 aa).

Serine 1 carries O-palmitoleoyl serine; by PORCN lipidation. The tract at residues alanine 41–leucine 69 is disordered. Residues alanine 47–proline 62 are compositionally biased toward basic residues. N-linked (GlcNAc...) asparagine glycosylation is present at asparagine 97. The cysteines at positions 100 and 111 are disulfide-linked.

The protein belongs to the Wnt family. Post-translationally, palmitoleoylation is required for efficient binding to frizzled receptors. Depalmitoleoylation leads to Wnt signaling pathway inhibition.

It localises to the secreted. The protein resides in the extracellular space. It is found in the extracellular matrix. In terms of biological role, ligand for members of the frizzled family of seven transmembrane receptors. Probable developmental protein. May be a signaling molecule which affects the development of discrete regions of tissues. Is likely to signal over only few cell diameters. The sequence is that of Protein Wnt-9 (WNT-9) from Eptatretus stoutii (Pacific hagfish).